A 249-amino-acid chain; its full sequence is Triosephosphate isomerase (249 aa).

Residue 9–11 (NWK) participates in substrate binding. The active-site Electrophile is the His-95. Glu-167 acts as the Proton acceptor in catalysis. Residues Gly-173, Ser-213, and 234-235 (GG) each bind substrate.

The protein belongs to the triosephosphate isomerase family. As to quaternary structure, homodimer.

The protein resides in the cytoplasm. The catalysed reaction is D-glyceraldehyde 3-phosphate = dihydroxyacetone phosphate. It functions in the pathway carbohydrate biosynthesis; gluconeogenesis. Its pathway is carbohydrate degradation; glycolysis; D-glyceraldehyde 3-phosphate from glycerone phosphate: step 1/1. Involved in the gluconeogenesis. Catalyzes stereospecifically the conversion of dihydroxyacetone phosphate (DHAP) to D-glyceraldehyde-3-phosphate (G3P). The sequence is that of Triosephosphate isomerase from Dictyoglomus turgidum (strain DSM 6724 / Z-1310).